The chain runs to 781 residues: Coiled-coil and C2 domain-containing protein 1-like (781 aa).

5 disordered regions span residues 32-63 (MGRV…NVPG), 94-134 (ELNG…APNS), 187-296 (ESEI…AKES), 313-373 (CSAD…TEGN), and 403-447 (GELP…VEGK). Over residues 37–59 (RPAAPARGAPPAARGRPAPAAPA) the composition is skewed to low complexity. The segment covering 98–107 (LVGGGGGGGA) has biased composition (gly residues). Residues 108 to 118 (APTVPTRAAPR) show a composition bias toward low complexity. Pro residues-rich tracts occupy residues 119 to 129 (APGPSGPPPSA) and 204 to 222 (PLPP…PAPP). Positions 244–256 (APAPTAAAPPATK) are enriched in low complexity. The segment covering 269-280 (ILHHRRDLHKQN) has biased composition (basic residues). Residues 285 to 296 (IADKDKESAKES) are compositionally biased toward basic and acidic residues. Positions 324-341 (PPSPPPYRKPAPPQPQAP) are enriched in pro residues. Residues 363–373 (KMAEKAKTEGN) are compositionally biased toward basic and acidic residues. The 137-residue stretch at 605 to 741 (YEMRQIPSAD…EHSAEMEESL (137 aa)) folds into the C2 domain.

It belongs to the CC2D1 family.

The chain is Coiled-coil and C2 domain-containing protein 1-like from Caenorhabditis elegans.